The following is a 263-amino-acid chain: Hydroxyethylthiazole kinase (263 aa).

Position 39 (M39) interacts with substrate. The ATP site is built by K115 and T160. G187 is a substrate binding site.

Belongs to the Thz kinase family. Requires Mg(2+) as cofactor.

The enzyme catalyses 5-(2-hydroxyethyl)-4-methylthiazole + ATP = 4-methyl-5-(2-phosphooxyethyl)-thiazole + ADP + H(+). It participates in cofactor biosynthesis; thiamine diphosphate biosynthesis; 4-methyl-5-(2-phosphoethyl)-thiazole from 5-(2-hydroxyethyl)-4-methylthiazole: step 1/1. In terms of biological role, catalyzes the phosphorylation of the hydroxyl group of 4-methyl-5-beta-hydroxyethylthiazole (THZ). In Staphylococcus saprophyticus subsp. saprophyticus (strain ATCC 15305 / DSM 20229 / NCIMB 8711 / NCTC 7292 / S-41), this protein is Hydroxyethylthiazole kinase.